Reading from the N-terminus, the 451-residue chain is uncharacterized protein (451 aa).

The first 22 residues, 1–22 (MKLKLIFSLFLVLVFCSLFVFG), serve as a signal peptide directing secretion. Residues N25, N45, N209, N326, and N402 are each glycosylated (N-linked (GlcNAc...) asparagine).

The protein localises to the secreted. This is an uncharacterized protein from Dictyostelium discoideum (Social amoeba).